We begin with the raw amino-acid sequence, 427 residues long: Glutamate-1-semialdehyde 2,1-aminomutase (427 aa).

Lys268 carries the post-translational modification N6-(pyridoxal phosphate)lysine.

It belongs to the class-III pyridoxal-phosphate-dependent aminotransferase family. HemL subfamily. It depends on pyridoxal 5'-phosphate as a cofactor.

The protein resides in the cytoplasm. It carries out the reaction (S)-4-amino-5-oxopentanoate = 5-aminolevulinate. It participates in porphyrin-containing compound metabolism; protoporphyrin-IX biosynthesis; 5-aminolevulinate from L-glutamyl-tRNA(Glu): step 2/2. The chain is Glutamate-1-semialdehyde 2,1-aminomutase from Methanococcus maripaludis (strain C7 / ATCC BAA-1331).